Reading from the N-terminus, the 228-residue chain is F-box protein At5g67140 (228 aa).

The 48-residue stretch at 4–51 (EAAIDRLPLDLLAYIFSLATSFTVLAQASGVCKKWRKAVNQSMARRET) folds into the F-box domain.

In Arabidopsis thaliana (Mouse-ear cress), this protein is F-box protein At5g67140.